The sequence spans 576 residues: Arginine--tRNA ligase (576 aa).

The 'HIGH' region signature appears at 126–136; it reads ANPTGPMHIGH.

Belongs to the class-I aminoacyl-tRNA synthetase family. In terms of assembly, monomer.

The protein localises to the cytoplasm. It carries out the reaction tRNA(Arg) + L-arginine + ATP = L-arginyl-tRNA(Arg) + AMP + diphosphate. The protein is Arginine--tRNA ligase of Rickettsia akari (strain Hartford).